The following is a 30-amino-acid chain: Acyl-CoA-binding protein 1 (30 aa).

Over residues 1-15 (ALKDEFEEHAEKAKT) the composition is skewed to basic and acidic residues. The interval 1-30 (ALKDEFEEHAEKAKTLPENTSNENKLILYG) is disordered. The 29-residue stretch at 2 to 30 (LKDEFEEHAEKAKTLPENTSNENKLILYG) folds into the ACB domain.

This sequence belongs to the ACBP family.

It is found in the cytoplasm. Its function is as follows. Binds medium- and long-chain acyl-CoA esters with very high affinity and may function as an intracellular carrier of acyl-CoA esters. In Digitalis lanata (Grecian foxglove), this protein is Acyl-CoA-binding protein 1.